The sequence spans 406 residues: 2,3-bisphosphoglycerate-independent phosphoglycerate mutase (406 aa).

It belongs to the BPG-independent phosphoglycerate mutase family. A-PGAM subfamily.

The enzyme catalyses (2R)-2-phosphoglycerate = (2R)-3-phosphoglycerate. It participates in carbohydrate degradation; glycolysis; pyruvate from D-glyceraldehyde 3-phosphate: step 3/5. Its function is as follows. Catalyzes the interconversion of 2-phosphoglycerate and 3-phosphoglycerate. This is 2,3-bisphosphoglycerate-independent phosphoglycerate mutase from Methanococcus maripaludis (strain C6 / ATCC BAA-1332).